The following is a 287-amino-acid chain: Phosphatidylserine decarboxylase proenzyme (287 aa).

Active-site charge relay system; for autoendoproteolytic cleavage activity residues include Asp90, His147, and Ser253. The active-site Schiff-base intermediate with substrate; via pyruvic acid; for decarboxylase activity is the Ser253. Ser253 is modified (pyruvic acid (Ser); by autocatalysis).

The protein belongs to the phosphatidylserine decarboxylase family. PSD-B subfamily. Prokaryotic type I sub-subfamily. As to quaternary structure, heterodimer of a large membrane-associated beta subunit and a small pyruvoyl-containing alpha subunit. Requires pyruvate as cofactor. Post-translationally, is synthesized initially as an inactive proenzyme. Formation of the active enzyme involves a self-maturation process in which the active site pyruvoyl group is generated from an internal serine residue via an autocatalytic post-translational modification. Two non-identical subunits are generated from the proenzyme in this reaction, and the pyruvate is formed at the N-terminus of the alpha chain, which is derived from the carboxyl end of the proenzyme. The autoendoproteolytic cleavage occurs by a canonical serine protease mechanism, in which the side chain hydroxyl group of the serine supplies its oxygen atom to form the C-terminus of the beta chain, while the remainder of the serine residue undergoes an oxidative deamination to produce ammonia and the pyruvoyl prosthetic group on the alpha chain. During this reaction, the Ser that is part of the protease active site of the proenzyme becomes the pyruvoyl prosthetic group, which constitutes an essential element of the active site of the mature decarboxylase.

Its subcellular location is the cell membrane. It carries out the reaction a 1,2-diacyl-sn-glycero-3-phospho-L-serine + H(+) = a 1,2-diacyl-sn-glycero-3-phosphoethanolamine + CO2. Its pathway is phospholipid metabolism; phosphatidylethanolamine biosynthesis; phosphatidylethanolamine from CDP-diacylglycerol: step 2/2. Functionally, catalyzes the formation of phosphatidylethanolamine (PtdEtn) from phosphatidylserine (PtdSer). The chain is Phosphatidylserine decarboxylase proenzyme from Aliivibrio fischeri (strain ATCC 700601 / ES114) (Vibrio fischeri).